A 223-amino-acid polypeptide reads, in one-letter code: Neurotrophic factor BDNF precursor form (223 aa).

An N-terminal signal peptide occupies residues 1–5 (SCMKA). A propeptide spanning residues 6–114 (APMKEVSIRG…AANMSMRVRR (109 aa)) is cleaved from the precursor. N107 is a glycosylation site (N-linked (GlcNAc...) asparagine). Disulfide bonds link C127–C194 and C172–C223.

The protein belongs to the NGF-beta family.

The protein resides in the secreted. In terms of biological role, promotes the survival of neuronal populations that are all located either in the central nervous system or directly connected to it. The polypeptide is Neurotrophic factor BDNF precursor form (BDNF) (Eryx colubrinus colubrinus).